The chain runs to 238 residues: uncharacterized protein (238 aa).

Transmembrane regions (helical) follow at residues 75–95 (YAIF…HNFY), 116–136 (IVLI…FSLI), and 172–192 (IQGL…LEVI). The disordered stretch occupies residues 200–238 (DVEMSSMRGQAITTEPASDNTMAEETDCNTSKDVESGSN). The segment covering 206–220 (MRGQAITTEPASDNT) has biased composition (polar residues). The segment covering 229-238 (TSKDVESGSN) has biased composition (basic and acidic residues).

The protein localises to the membrane. This is an uncharacterized protein from Schizosaccharomyces pombe (strain 972 / ATCC 24843) (Fission yeast).